The sequence spans 261 residues: Peroxiredoxin PRX1, mitochondrial (261 aa).

The transit peptide at 1–13 (MFSRICSAQLKRT) directs the protein to the mitochondrion. The 164-residue stretch at 49–212 (LRINSDAPNF…VLRVIDALQL (164 aa)) folds into the Thioredoxin domain. The residue at position 53 (Ser-53) is a Phosphoserine. Cys-91 serves as the catalytic Cysteine sulfenic acid (-SOH) intermediate.

It belongs to the peroxiredoxin family. Prx6 subfamily. In terms of assembly, homodimer; disulfide-linked.

Its subcellular location is the mitochondrion. The enzyme catalyses a hydroperoxide + 2 glutathione = an alcohol + glutathione disulfide + H2O. It carries out the reaction [glutaredoxin]-dithiol + a hydroperoxide = [glutaredoxin]-disulfide + an alcohol + H2O. Thiol-specific peroxidase that catalyzes the reduction of hydrogen peroxide and organic hydroperoxides to water and alcohols, respectively. Plays a role in cell protection against oxidative stress by detoxifying peroxides and as sensor of hydrogen peroxide-mediated signaling events. Involved in mitochondrial protection of cadmium-induced oxidative stress. The sequence is that of Peroxiredoxin PRX1, mitochondrial from Saccharomyces cerevisiae (strain ATCC 204508 / S288c) (Baker's yeast).